The primary structure comprises 532 residues: Purple acid phosphatase 15 (532 aa).

Positions 1–19 are cleaved as a signal peptide; sequence MTFLLLLLFCFLSPAISSA. A glycan (N-linked (GlcNAc...) asparagine) is linked at Asn136. Asp194 lines the Fe cation pocket. Residue Asn200 is glycosylated (N-linked (GlcNAc...) asparagine). The Fe cation site is built by Asp221 and Tyr224. Zn(2+) is bound at residue Asp221. Residues Asn231 and Asn264 are each glycosylated (N-linked (GlcNAc...) asparagine). Asn277 contributes to the Zn(2+) binding site. Asn277 provides a ligand contact to substrate. Residues Asn286 and Asn301 are each glycosylated (N-linked (GlcNAc...) asparagine). His359 serves as a coordination point for Zn(2+). Catalysis depends on His369, which acts as the Proton donor. His396 lines the Zn(2+) pocket. 396-398 contributes to the substrate binding site; that stretch reads HVH. His398 contacts Fe cation. N-linked (GlcNAc...) asparagine glycosylation occurs at Asn491.

It belongs to the metallophosphoesterase superfamily. Purple acid phosphatase family. In terms of assembly, homodimer. Fe cation serves as cofactor. Requires Zn(2+) as cofactor. Expressed in roots, stems, cotyledons, leaves, flowers and siliques.

Its subcellular location is the secreted. The catalysed reaction is 1D-myo-inositol hexakisphosphate + H2O = 1D-myo-inositol 1,2,3,5,6-pentakisphosphate + phosphate. The enzyme catalyses a phosphate monoester + H2O = an alcohol + phosphate. In terms of biological role, acid phosphatase activity with p-nitrophenyl phosphate (pNPP), D-myoinositol 1-phosphate (Ins(1)P1), phytic acid and Myo-inositol hexakisphosphate. Low or no activity with Glc-6-P and ATP. Confers shoot growth stimulation, enhanced salt and osmotic stress tolerance, and ABA insensitivity. May modulate ascorbic acid (AsA) levels by controlling the input of myoinositol into this branch of AsA biosynthesis. This is Purple acid phosphatase 15 (PAP15) from Arabidopsis thaliana (Mouse-ear cress).